A 261-amino-acid chain; its full sequence is Glucose 1-dehydrogenase (261 aa).

Residue 11–35 (VITGSSTGLGKSMAIRFATEKAKVV) coordinates NADP(+). Ser145 is a substrate binding site. Tyr158 functions as the Proton acceptor in the catalytic mechanism.

The protein belongs to the short-chain dehydrogenases/reductases (SDR) family. As to quaternary structure, homotetramer.

The enzyme catalyses D-glucose + NAD(+) = D-glucono-1,5-lactone + NADH + H(+). It catalyses the reaction D-glucose + NADP(+) = D-glucono-1,5-lactone + NADPH + H(+). In Priestia megaterium (Bacillus megaterium), this protein is Glucose 1-dehydrogenase.